The primary structure comprises 95 residues: uncharacterized protein (95 aa).

A helical membrane pass occupies residues 29–53 (LVSTATCMAALFLRFKLIAWVAFIL).

It is found in the membrane. This is an uncharacterized protein from Schizosaccharomyces pombe (strain 972 / ATCC 24843) (Fission yeast).